Reading from the N-terminus, the 133-residue chain is Single-stranded DNA-binding protein 2 (133 aa).

In terms of domain architecture, SSB spans 1–103; sequence MNKTILIGRL…VVAEEVKFLE (103 aa).

Homotetramer.

This is Single-stranded DNA-binding protein 2 (ssb2) from Clostridium acetobutylicum (strain ATCC 824 / DSM 792 / JCM 1419 / IAM 19013 / LMG 5710 / NBRC 13948 / NRRL B-527 / VKM B-1787 / 2291 / W).